A 237-amino-acid chain; its full sequence is Redox-sensing transcriptional repressor Rex (237 aa).

The segment at residues 45–84 is a DNA-binding region (H-T-H motif); the sequence is LYYRELHRLLAAGESSTNSRDLGAMVNVSPAVVRRDLSSI. NAD(+) is bound at residue 119–124; it reads GVGSLG.

This sequence belongs to the transcriptional regulatory Rex family. In terms of assembly, homodimer.

The protein localises to the cytoplasm. Modulates transcription in response to changes in cellular NADH/NAD(+) redox state. The protein is Redox-sensing transcriptional repressor Rex of Rhodopirellula baltica (strain DSM 10527 / NCIMB 13988 / SH1).